We begin with the raw amino-acid sequence, 436 residues long: MAKIVKVIGREIIDSRGNPTVEAEVHLEGGFVGLAAAPSGASTGSREALELRDGDKSRFLGKGVLKAVSAVNNEIAQAILGKDGSAQAEIDQIMIDLDGTDNKSKFGANAILAVSLATAKAAAASKGLPLYAYIAELNGTPGVYSMPLPMMNIINGGEHADNNVDIQEFMIQPVGASTLKEALRIGAEVFHNLAKVLKSKGLNTAVGDEGGFAPNLASNADALACIKEAVEKAGYVLGKDVTLAMDCASSEFYNKENGLYEMKGEGKSFTSQEFTHYLEGLCNEYPIKSIEDGQDESDWEGFAYQTKVLGGKIQLVGDDLFVTNTKILKEGIEKGIANSILIKFNQIGSLTETLAAIKMAKDAGYTAVISHRSGETEDATIADLAVGTAAGQIKTGSMSRSDRVAKYNQLIRIEEALAAAGTPAPFNGLKEVKGQA.

Gln167 provides a ligand contact to (2R)-2-phosphoglycerate. Glu209 acts as the Proton donor in catalysis. Mg(2+) contacts are provided by Asp246, Glu291, and Asp318. Residues Lys343, Arg372, Ser373, and Lys394 each coordinate (2R)-2-phosphoglycerate. Catalysis depends on Lys343, which acts as the Proton acceptor.

It belongs to the enolase family. As to quaternary structure, component of the RNA degradosome, a multiprotein complex involved in RNA processing and mRNA degradation. Mg(2+) is required as a cofactor.

Its subcellular location is the cytoplasm. The protein localises to the secreted. It is found in the cell surface. It carries out the reaction (2R)-2-phosphoglycerate = phosphoenolpyruvate + H2O. Its pathway is carbohydrate degradation; glycolysis; pyruvate from D-glyceraldehyde 3-phosphate: step 4/5. In terms of biological role, catalyzes the reversible conversion of 2-phosphoglycerate (2-PG) into phosphoenolpyruvate (PEP). It is essential for the degradation of carbohydrates via glycolysis. The protein is Enolase of Actinobacillus pleuropneumoniae serotype 5b (strain L20).